A 386-amino-acid chain; its full sequence is Bifunctional enzyme IspD/IspF (386 aa).

The 2-C-methyl-D-erythritol 4-phosphate cytidylyltransferase stretch occupies residues 1 to 231 (MKNGAVIIPA…REKKEPMQKI (231 aa)). Residues 232–386 (RIGHGFDAHQ…SCHAVVLLQQ (155 aa)) are 2-C-methyl-D-erythritol 2,4-cyclodiphosphate synthase. A divalent metal cation contacts are provided by Asp238 and His240. Residues 238–240 (DAH) and 264–265 (HS) each bind 4-CDP-2-C-methyl-D-erythritol 2-phosphate. His272 provides a ligand contact to a divalent metal cation. Residues 286-288 (DIG), 362-365 (TTTE), Tyr369, and Arg372 each bind 4-CDP-2-C-methyl-D-erythritol 2-phosphate.

It in the N-terminal section; belongs to the IspD/TarI cytidylyltransferase family. IspD subfamily. This sequence in the C-terminal section; belongs to the IspF family. It depends on a divalent metal cation as a cofactor.

It catalyses the reaction 2-C-methyl-D-erythritol 4-phosphate + CTP + H(+) = 4-CDP-2-C-methyl-D-erythritol + diphosphate. The catalysed reaction is 4-CDP-2-C-methyl-D-erythritol 2-phosphate = 2-C-methyl-D-erythritol 2,4-cyclic diphosphate + CMP. The protein operates within isoprenoid biosynthesis; isopentenyl diphosphate biosynthesis via DXP pathway; isopentenyl diphosphate from 1-deoxy-D-xylulose 5-phosphate: step 2/6. It functions in the pathway isoprenoid biosynthesis; isopentenyl diphosphate biosynthesis via DXP pathway; isopentenyl diphosphate from 1-deoxy-D-xylulose 5-phosphate: step 4/6. Its function is as follows. Bifunctional enzyme that catalyzes the formation of 4-diphosphocytidyl-2-C-methyl-D-erythritol from CTP and 2-C-methyl-D-erythritol 4-phosphate (MEP) (IspD), and catalyzes the conversion of 4-diphosphocytidyl-2-C-methyl-D-erythritol 2-phosphate (CDP-ME2P) to 2-C-methyl-D-erythritol 2,4-cyclodiphosphate (ME-CPP) with a corresponding release of cytidine 5-monophosphate (CMP) (IspF). In Desulfotalea psychrophila (strain LSv54 / DSM 12343), this protein is Bifunctional enzyme IspD/IspF.